Here is a 231-residue protein sequence, read N- to C-terminus: Urease accessory protein UreF (231 aa).

This sequence belongs to the UreF family. In terms of assembly, ureD, UreF and UreG form a complex that acts as a GTP-hydrolysis-dependent molecular chaperone, activating the urease apoprotein by helping to assemble the nickel containing metallocenter of UreC. The UreE protein probably delivers the nickel.

It localises to the cytoplasm. Functionally, required for maturation of urease via the functional incorporation of the urease nickel metallocenter. In Marinobacter nauticus (strain ATCC 700491 / DSM 11845 / VT8) (Marinobacter aquaeolei), this protein is Urease accessory protein UreF.